A 683-amino-acid polypeptide reads, in one-letter code: Synaptic vesicle glycoprotein 2B (683 aa).

Residues 1-10 (MDDYRYRDNY) show a composition bias toward basic and acidic residues. Residues 1–72 (MDDYRYRDNY…QTKMAPSRAD (72 aa)) form a disordered region. The Cytoplasmic portion of the chain corresponds to 1–110 (MDDYRYRDNY…ECGHGRFQWT (110 aa)). Ser33 bears the Phosphoserine mark. The residue at position 36 (Thr36) is a Phosphothreonine. A helical membrane pass occupies residues 111-131 (LFFVLVLALMADGVEVFVVSF). At 132 to 148 (ALPSAEKDMCLSSSKKG) the chain is on the extracellular side. Residues 149 to 169 (MLGLIVYLGMMAGAFILGGLA) form a helical membrane-spanning segment. Topologically, residues 170 to 182 (DKLGRKKVLSMSL) are cytoplasmic. A helical membrane pass occupies residues 183 to 203 (AINASFASLSSFVQGYGAFLF). Residues 204–205 (CR) are Extracellular-facing. The helical transmembrane segment at 206–226 (LISGIGIGGSLPIVFAYFSEF) threads the bilayer. The Cytoplasmic segment spans residues 227 to 237 (LSREKRGEHLS). A helical membrane pass occupies residues 238–258 (WLGIFWMTGGIYASAMAWSII). Over 259–277 (PHYGWGFSMGTNYHFHSWR) the chain is Extracellular. A helical transmembrane segment spans residues 278–298 (VFVIVCALPATVSMVALKFMP). Over 299–390 (ESPRFLLEMG…CVMGPYRMNT (92 aa)) the chain is Cytoplasmic. Residues 391–411 (LILAVVWFTMALSYYGLTVWF) form a helical membrane-spanning segment. Residues 412–535 (PDMIRYFQDE…CHMDFEEDND (124 aa)) lie on the Extracellular side of the membrane. Tyr423 carries the post-translational modification Phosphotyrosine. 3 N-linked (GlcNAc...) asparagine glycosylation sites follow: Asn441, Asn491, and Asn516. A helical transmembrane segment spans residues 536–556 (FLIYLVSFLGSLSVLPGNIIS). Residues 557-565 (ALLMDRIGR) are Cytoplasmic-facing. Residues 566-586 (LKMIGGSMLISAVCCFFLFFG) traverse the membrane as a helical segment. Residues 587–592 (NSESAM) are Extracellular-facing. A helical transmembrane segment spans residues 593-613 (IGWQCLFCGTSIAAWNALDVI). Residues 614 to 626 (TVELYPTNQRATA) lie on the Cytoplasmic side of the membrane. The chain crosses the membrane as a helical span at residues 627–649 (FGILNGLCKLGAILGNTIFASFV). Topologically, residues 650-653 (GITK) are extracellular. The chain crosses the membrane as a helical span at residues 654–672 (VVPILLAAASLVGGGLVAL). At 673 to 683 (RLPETREQVLM) the chain is on the cytoplasmic side.

It belongs to the major facilitator superfamily. In terms of assembly, interacts with SYT1 in a calcium-independent manner. Forms a complex with SYT1, syntaxin-1 and SNAP25. (Microbial infection) Interacts with C.botulinum neurotoxin type A1 and type A2 (BoNT/A, botA). Interaction is improved by glycosylation of SV2. As to quaternary structure, (Microbial infection) Interacts with C.botulinum neurotoxin type D (BoNT/D, botD). In terms of assembly, (Microbial infection) Interacts with C.botulinum neurotoxin type E (BoNT/E). Interaction requires glycosylation of SV2 proteins. (Microbial infection) Interacts with C.botulinum neurotoxin type F (BoNT/F). Interaction requires glycosylation of SV2 proteins. Post-translationally, N-glycosylated. The N-terminal cytoplasmic domain is phosphorylated by CK1. In terms of tissue distribution, widely expressed throughout the brain. Specifically expressed by pinealocytes in the pineal gland. Also detected in testis (at protein level). Specifically expressed in neural tissues. Expressed in the spinal cord and in all brain regions with a stronger expression in hippocampus and cortex.

The protein localises to the cytoplasmic vesicle. It localises to the secretory vesicle. It is found in the synaptic vesicle membrane. The protein resides in the acrosome. Functionally, probably plays a role in the control of regulated secretion in neural and endocrine cells. In terms of biological role, (Microbial infection) Receptor for C.botulinum neurotoxin type A (BoNT/A, botA); the toxin binds via extracellular loop 4. Restores uptake of BoNT/A in mouse and rat cells that are deleted for SV2 receptor. Glycosylation of SV2B is not essential for receptor activity, but enhances the interaction. Also serves as a receptor for the closely related C.botulinum neurotoxin type A2; glycosylation is not essential but enhances the interaction. Its function is as follows. (Microbial infection) Possible receptor for C.botulinum neurotoxin type D (BoNT/D, botD); BoNT/D does not bind to extracellular loop 4 as do BoNT/A and BoNT/E. Another group does not find a convincing interaction with SV2. (Microbial infection) Receptor for C.botulinum neurotoxin type E (BoNT/E); the toxin probably binds via extracellular loop 4. Restores uptake of BoNT/E in mouse cells that are deleted for SV2 receptor. Glycosylation of SV2B is not essential for receptor activity, but enhances the interaction. Functionally, (Microbial infection) Receptor for C.botulinum neurotoxin type F (BoNT/F); binding requires glycosylation of this protein. This chain is Synaptic vesicle glycoprotein 2B (Sv2b), found in Rattus norvegicus (Rat).